A 100-amino-acid polypeptide reads, in one-letter code: Small ribosomal subunit protein uS14c (100 aa).

This sequence belongs to the universal ribosomal protein uS14 family. In terms of assembly, part of the 30S ribosomal subunit.

It is found in the plastid. The protein localises to the chloroplast. Functionally, binds 16S rRNA, required for the assembly of 30S particles. The polypeptide is Small ribosomal subunit protein uS14c (Citrus sinensis (Sweet orange)).